We begin with the raw amino-acid sequence, 303 residues long: N-acetyl-D-glucosamine kinase (303 aa).

ATP is bound by residues 4-11 (GFDIGGTK) and 133-140 (GVGGGLVL). Positions 157, 177, 179, and 184 each coordinate Zn(2+).

Belongs to the ROK (NagC/XylR) family. NagK subfamily.

The catalysed reaction is N-acetyl-D-glucosamine + ATP = N-acetyl-D-glucosamine 6-phosphate + ADP + H(+). The protein operates within cell wall biogenesis; peptidoglycan recycling. Functionally, catalyzes the phosphorylation of N-acetyl-D-glucosamine (GlcNAc) derived from cell-wall degradation, yielding GlcNAc-6-P. This is N-acetyl-D-glucosamine kinase from Salmonella arizonae (strain ATCC BAA-731 / CDC346-86 / RSK2980).